The chain runs to 199 residues: Prolactin-2 (199 aa).

3 cysteine pairs are disulfide-bonded: Cys-4–Cys-11, Cys-58–Cys-174, and Cys-191–Cys-199.

This sequence belongs to the somatotropin/prolactin family.

The protein localises to the secreted. The protein is Prolactin-2 of Alligator mississippiensis (American alligator).